A 248-amino-acid polypeptide reads, in one-letter code: Small ribosomal subunit protein uS3 (248 aa).

Residues 39 to 107 (IRQMLLKQLK…EVFINIVEIR (69 aa)) form the KH type-2 domain. A disordered region spans residues 214–248 (AVDKRMTAESEGPSSGRPPRRDRDRDRDRDRDSAA). Residues 232–248 (PRRDRDRDRDRDRDSAA) show a composition bias toward basic and acidic residues.

This sequence belongs to the universal ribosomal protein uS3 family. As to quaternary structure, part of the 30S ribosomal subunit. Forms a tight complex with proteins S10 and S14.

Binds the lower part of the 30S subunit head. Binds mRNA in the 70S ribosome, positioning it for translation. This Azorhizobium caulinodans (strain ATCC 43989 / DSM 5975 / JCM 20966 / LMG 6465 / NBRC 14845 / NCIMB 13405 / ORS 571) protein is Small ribosomal subunit protein uS3.